A 228-amino-acid polypeptide reads, in one-letter code: Ribonuclease 3 (228 aa).

Positions Lys-5–Gly-127 constitute an RNase III domain. Glu-40 is a binding site for Mg(2+). Asp-44 is an active-site residue. Asp-113 and Glu-116 together coordinate Mg(2+). Residue Glu-116 is part of the active site. The DRBM domain maps to Asp-154–Asp-224. The segment at Ala-200–Arg-228 is disordered. Residues Met-218–Arg-228 are compositionally biased toward basic and acidic residues.

It belongs to the ribonuclease III family. Homodimer. Mg(2+) is required as a cofactor.

It localises to the cytoplasm. The enzyme catalyses Endonucleolytic cleavage to 5'-phosphomonoester.. In terms of biological role, digests double-stranded RNA. Involved in the processing of primary rRNA transcript to yield the immediate precursors to the large and small rRNAs (23S and 16S). Processes some mRNAs, and tRNAs when they are encoded in the rRNA operon. Processes pre-crRNA and tracrRNA of type II CRISPR loci if present in the organism. The protein is Ribonuclease 3 of Alkalilimnicola ehrlichii (strain ATCC BAA-1101 / DSM 17681 / MLHE-1).